Consider the following 535-residue polypeptide: Heat shock factor protein 2 (535 aa).

Residues Lys2, Lys82, Lys135, Lys139, Lys151, Lys210, Lys218, and Lys237 each participate in a glycyl lysine isopeptide (Lys-Gly) (interchain with G-Cter in SUMO2) cross-link. The DNA-binding element occupies 7–112 (VPAFLSKLWT…LLENIKRKVS (106 aa)). Residues 119–192 (NKIRQEDLTK…VTLVQNNQLV (74 aa)) form a hydrophobic repeat HR-A/B region. A disordered region spans residues 298-325 (QSGEQSEPAREPLRVGSAGSSSPLMSSA). Low complexity predominate over residues 313-325 (GSAGSSSPLMSSA). A hydrophobic repeat HR-C region spans residues 359-384 (LLDYLDSIDCSLEDFQAMLSGRQFSI). Positions 418–437 (TKSSVVQHVSEEGRKSKSKP) are disordered. The segment covering 426 to 437 (VSEEGRKSKSKP) has biased composition (basic and acidic residues).

Belongs to the HSF family. DNA-binding homotrimer in stressed or heat shocked cells, otherwise found as a homodimer. Isoform alpha is expressed predominantly in testis while isoform beta is expressed predominantly in heart and brain.

It is found in the cytoplasm. The protein localises to the nucleus. Its function is as follows. DNA-binding protein that specifically binds heat shock promoter elements (HSE) and activates transcription. In higher eukaryotes, HSF is unable to bind to the HSE unless the cells are heat shocked. HSF2 is expressed in a form that binds DNA constitutively but loses DNA binding by incubation at greater than 41 degrees C. The chain is Heat shock factor protein 2 (Hsf2) from Mus musculus (Mouse).